The chain runs to 1241 residues: Dinoflagellate luciferase (1241 aa).

Luciferase stretches follow at residues K114–D465, D491–D842, and E868–D1218.

The protein belongs to the calycin superfamily. Luciferase family.

It is found in the cytoplasmic vesicle. It catalyses the reaction dinoflagellate luciferin + O2 = oxidized dinoflagellate luciferin + hnu + H2O + H(+). With respect to regulation, regulated by pH: upon acidification, at a pH of 6.3, dinoflagellate luciferin is released from luciferin-binding protein LBP, allowing the interaction between Dinoflagellate luciferase and its substrate luciferin. In terms of biological role, emits blue light flashes with a wavelength of 475 nm during the night phase. The polypeptide is Dinoflagellate luciferase (Lingulodinium polyedra (Dinoflagellate)).